The chain runs to 253 residues: UPF0174 protein jhp_1494 (253 aa).

This sequence belongs to the UPF0174 family.

This Helicobacter pylori (strain J99 / ATCC 700824) (Campylobacter pylori J99) protein is UPF0174 protein jhp_1494.